The sequence spans 326 residues: Malate dehydrogenase (326 aa).

Position 11 to 17 (Gly11 to Gly17) interacts with NAD(+). Residues Arg92 and Arg98 each coordinate substrate. Residues Asn105, Gln112, and Val129–Asn131 each bind NAD(+). Residues Asn131 and Arg162 each coordinate substrate. Catalysis depends on His187, which acts as the Proton acceptor.

This sequence belongs to the LDH/MDH superfamily. MDH type 2 family.

The catalysed reaction is (S)-malate + NAD(+) = oxaloacetate + NADH + H(+). Catalyzes the reversible oxidation of malate to oxaloacetate. This chain is Malate dehydrogenase, found in Chromobacterium violaceum (strain ATCC 12472 / DSM 30191 / JCM 1249 / CCUG 213 / NBRC 12614 / NCIMB 9131 / NCTC 9757 / MK).